The primary structure comprises 491 residues: Protein nucleotidyltransferase YdiU (491 aa).

Positions 88, 90, 91, 111, 123, 124, 174, and 181 each coordinate ATP. The active-site Proton acceptor is the D250. Mg(2+) is bound by residues N251 and D260. D260 is an ATP binding site.

This sequence belongs to the SELO family. The cofactor is Mg(2+). Requires Mn(2+) as cofactor.

It carries out the reaction L-seryl-[protein] + ATP = 3-O-(5'-adenylyl)-L-seryl-[protein] + diphosphate. It catalyses the reaction L-threonyl-[protein] + ATP = 3-O-(5'-adenylyl)-L-threonyl-[protein] + diphosphate. The catalysed reaction is L-tyrosyl-[protein] + ATP = O-(5'-adenylyl)-L-tyrosyl-[protein] + diphosphate. The enzyme catalyses L-histidyl-[protein] + UTP = N(tele)-(5'-uridylyl)-L-histidyl-[protein] + diphosphate. It carries out the reaction L-seryl-[protein] + UTP = O-(5'-uridylyl)-L-seryl-[protein] + diphosphate. It catalyses the reaction L-tyrosyl-[protein] + UTP = O-(5'-uridylyl)-L-tyrosyl-[protein] + diphosphate. In terms of biological role, nucleotidyltransferase involved in the post-translational modification of proteins. It can catalyze the addition of adenosine monophosphate (AMP) or uridine monophosphate (UMP) to a protein, resulting in modifications known as AMPylation and UMPylation. In Bradyrhizobium sp. (strain BTAi1 / ATCC BAA-1182), this protein is Protein nucleotidyltransferase YdiU.